The chain runs to 466 residues: ATP synthase subunit beta (466 aa).

Residue 152-159 (GGAGVGKT) coordinates ATP.

It belongs to the ATPase alpha/beta chains family. F-type ATPases have 2 components, CF(1) - the catalytic core - and CF(0) - the membrane proton channel. CF(1) has five subunits: alpha(3), beta(3), gamma(1), delta(1), epsilon(1). CF(0) has three main subunits: a(1), b(2) and c(9-12). The alpha and beta chains form an alternating ring which encloses part of the gamma chain. CF(1) is attached to CF(0) by a central stalk formed by the gamma and epsilon chains, while a peripheral stalk is formed by the delta and b chains.

The protein localises to the cell inner membrane. The catalysed reaction is ATP + H2O + 4 H(+)(in) = ADP + phosphate + 5 H(+)(out). Its function is as follows. Produces ATP from ADP in the presence of a proton gradient across the membrane. The catalytic sites are hosted primarily by the beta subunits. This Helicobacter pylori (strain HPAG1) protein is ATP synthase subunit beta.